Reading from the N-terminus, the 304-residue chain is Undecaprenyl-diphosphatase (304 aa).

Helical transmembrane passes span 5–25 (FLFI…EFVP), 47–67 (GFPE…VVVL), 72–92 (ISSS…LKTS), 111–131 (FGIN…LFHD), 137–157 (LFST…LIVI), 209–231 (ISGL…AMVG), 248–268 (TNWI…LVVI), and 283–303 (FAIY…TKVI).

This sequence belongs to the UppP family.

It localises to the cell membrane. It catalyses the reaction di-trans,octa-cis-undecaprenyl diphosphate + H2O = di-trans,octa-cis-undecaprenyl phosphate + phosphate + H(+). In terms of biological role, catalyzes the dephosphorylation of undecaprenyl diphosphate (UPP). Confers resistance to bacitracin. This chain is Undecaprenyl-diphosphatase, found in Clostridium perfringens (strain ATCC 13124 / DSM 756 / JCM 1290 / NCIMB 6125 / NCTC 8237 / Type A).